The primary structure comprises 364 residues: D-alanine--D-alanine ligase (364 aa).

Residues 146-352 (KLCAMNAGIA…FAELVEKLLL (207 aa)) form the ATP-grasp domain. 179 to 234 (TKRFDWPLFVKPASLGSSVGISKVRNAEELAAALENACGLDSKALVEAAISGREIE) contributes to the ATP binding site. Mg(2+)-binding residues include aspartate 305, glutamate 319, and asparagine 321.

This sequence belongs to the D-alanine--D-alanine ligase family. Mg(2+) serves as cofactor. It depends on Mn(2+) as a cofactor.

It localises to the cytoplasm. It carries out the reaction 2 D-alanine + ATP = D-alanyl-D-alanine + ADP + phosphate + H(+). The protein operates within cell wall biogenesis; peptidoglycan biosynthesis. Cell wall formation. In Chlorobaculum tepidum (strain ATCC 49652 / DSM 12025 / NBRC 103806 / TLS) (Chlorobium tepidum), this protein is D-alanine--D-alanine ligase.